Reading from the N-terminus, the 394-residue chain is Protein TsgA homolog (394 aa).

12 helical membrane-spanning segments follow: residues 11–31 (WISFFSYALTGALVIVTGMVM), 51–71 (FLNTGILVSIFLNAWLMEIIP), 76–96 (LVFGFILMILAIAGLMVGHNL), 101–121 (ACMFVLGVVSGITMSIGTFLI), 134–154 (LLFTDSFFSMAGMVFPIIAAT), 160–180 (VAWYWVYACIGVLYLAIFILT), 206–226 (IGVLFLSIAALCYILGQLGFI), 246–266 (GLVSNFWTAYMVGMWFFSVAL), 274–294 (IVTVLAALSTFMMYMFVSSQQ), 297–317 (MLSMYILGLGFVSSAIYTTLI), 334–354 (FILTCGTIGTMLTFVVTGPIV), and 363–383 (LATANGLYLVVFVMCVLLGFV).

This sequence belongs to the major facilitator superfamily. TsgA family.

It localises to the cell inner membrane. This chain is Protein TsgA homolog, found in Edwardsiella ictaluri (strain 93-146).